A 518-amino-acid chain; its full sequence is Glutamate--cysteine ligase (518 aa).

Belongs to the glutamate--cysteine ligase type 1 family. Type 1 subfamily.

The catalysed reaction is L-cysteine + L-glutamate + ATP = gamma-L-glutamyl-L-cysteine + ADP + phosphate + H(+). The protein operates within sulfur metabolism; glutathione biosynthesis; glutathione from L-cysteine and L-glutamate: step 1/2. The chain is Glutamate--cysteine ligase from Salmonella agona (strain SL483).